A 179-amino-acid polypeptide reads, in one-letter code: CASP-like protein 5A2 (179 aa).

The segment at 1–24 is disordered; sequence MNVSHASVHPVEDPPAAATEVENP. Over 1 to 38 the chain is Cytoplasmic; the sequence is MNVSHASVHPVEDPPAAATEVENPPRVRMDDMEGMPGT. Residues 39–59 traverse the membrane as a helical segment; that stretch reads LLGLALRFFQFLFAAAALCVM. Residues 60–70 lie on the Extracellular side of the membrane; it reads ASTSDFPSVTA. Residues 71–91 form a helical membrane-spanning segment; it reads FCYLVAATGLQSLWSLALAMV. At 92–115 the chain is on the cytoplasmic side; it reads DVYAIMVKRSLQNRRLVSLFAIGD. Residues 116–136 traverse the membrane as a helical segment; it reads GVTSTLTFAAACASAGITVLI. Residues 137–155 are Extracellular-facing; the sequence is DNDLNSCAQNHCVQFETST. Residues 156-176 form a helical membrane-spanning segment; the sequence is ALAFISWFAALPSFLFNFWSL. Over 177–179 the chain is Cytoplasmic; it reads ASR.

Belongs to the Casparian strip membrane proteins (CASP) family. In terms of assembly, homodimer and heterodimers.

Its subcellular location is the cell membrane. The chain is CASP-like protein 5A2 from Arabidopsis thaliana (Mouse-ear cress).